The chain runs to 434 residues: Ribosomal protein uS12 methylthiotransferase RimO (434 aa).

Residues 9–125 form the MTTase N-terminal domain; the sequence is PAIFLLSLGC…VLAAIGAKYR (117 aa). [4Fe-4S] cluster-binding residues include Cys-18, Cys-54, Cys-88, Cys-149, Cys-153, and Cys-156. The Radical SAM core domain maps to 135-364; it reads LTPPHYAFLK…MELQEGISAS (230 aa). The TRAM domain occupies 367–434; it reads RKLEGQTLKV…AYELFGRISG (68 aa).

The protein belongs to the methylthiotransferase family. RimO subfamily. Requires [4Fe-4S] cluster as cofactor.

It is found in the cytoplasm. The enzyme catalyses L-aspartate(89)-[ribosomal protein uS12]-hydrogen + (sulfur carrier)-SH + AH2 + 2 S-adenosyl-L-methionine = 3-methylsulfanyl-L-aspartate(89)-[ribosomal protein uS12]-hydrogen + (sulfur carrier)-H + 5'-deoxyadenosine + L-methionine + A + S-adenosyl-L-homocysteine + 2 H(+). Functionally, catalyzes the methylthiolation of an aspartic acid residue of ribosomal protein uS12. This chain is Ribosomal protein uS12 methylthiotransferase RimO, found in Chlorobaculum tepidum (strain ATCC 49652 / DSM 12025 / NBRC 103806 / TLS) (Chlorobium tepidum).